The primary structure comprises 250 residues: Aminoglycoside 3'-phosphotransferase (250 aa).

Asp-178 functions as the Proton acceptor in the catalytic mechanism.

The protein belongs to the aminoglycoside phosphotransferase family.

The catalysed reaction is kanamycin A + ATP = kanamycin 3'-phosphate + ADP + H(+). In terms of biological role, resistance to kanamycin and structurally-related aminoglycosides, including amikacin. This is Aminoglycoside 3'-phosphotransferase (aphA-7) from Campylobacter jejuni.